Reading from the N-terminus, the 874-residue chain is Alanine--tRNA ligase (874 aa).

Residues His-562, His-566, Cys-663, and His-667 each contribute to the Zn(2+) site.

This sequence belongs to the class-II aminoacyl-tRNA synthetase family. Requires Zn(2+) as cofactor.

The protein localises to the cytoplasm. The enzyme catalyses tRNA(Ala) + L-alanine + ATP = L-alanyl-tRNA(Ala) + AMP + diphosphate. Functionally, catalyzes the attachment of alanine to tRNA(Ala) in a two-step reaction: alanine is first activated by ATP to form Ala-AMP and then transferred to the acceptor end of tRNA(Ala). Also edits incorrectly charged Ser-tRNA(Ala) and Gly-tRNA(Ala) via its editing domain. The chain is Alanine--tRNA ligase from Bordetella parapertussis (strain 12822 / ATCC BAA-587 / NCTC 13253).